Consider the following 393-residue polypeptide: L-rhamnonate dehydratase (393 aa).

Substrate contacts are provided by His22 and Arg48. Positions 214, 241, and 269 each coordinate Mg(2+). The active-site Proton acceptor is the His319. Glu339 is a binding site for substrate.

The protein belongs to the mandelate racemase/muconate lactonizing enzyme family. RhamD subfamily. In terms of assembly, homooctamer; tetramer of dimers. Requires Mg(2+) as cofactor.

It carries out the reaction L-rhamnonate = 2-dehydro-3-deoxy-L-rhamnonate + H2O. Its function is as follows. Catalyzes the dehydration of L-rhamnonate to 2-keto-3-deoxy-L-rhamnonate (KDR). The chain is L-rhamnonate dehydratase from Azorhizobium caulinodans (strain ATCC 43989 / DSM 5975 / JCM 20966 / LMG 6465 / NBRC 14845 / NCIMB 13405 / ORS 571).